Consider the following 245-residue polypeptide: 1-(5-phosphoribosyl)-5-[(5-phosphoribosylamino)methylideneamino] imidazole-4-carboxamide isomerase (245 aa).

The active-site Proton acceptor is the Asp-8. Residue Asp-129 is the Proton donor of the active site.

This sequence belongs to the HisA/HisF family.

It localises to the cytoplasm. The enzyme catalyses 1-(5-phospho-beta-D-ribosyl)-5-[(5-phospho-beta-D-ribosylamino)methylideneamino]imidazole-4-carboxamide = 5-[(5-phospho-1-deoxy-D-ribulos-1-ylimino)methylamino]-1-(5-phospho-beta-D-ribosyl)imidazole-4-carboxamide. It functions in the pathway amino-acid biosynthesis; L-histidine biosynthesis; L-histidine from 5-phospho-alpha-D-ribose 1-diphosphate: step 4/9. The sequence is that of 1-(5-phosphoribosyl)-5-[(5-phosphoribosylamino)methylideneamino] imidazole-4-carboxamide isomerase from Rhodopseudomonas palustris (strain BisB5).